Here is a 240-residue protein sequence, read N- to C-terminus: Cysteine-rich venom protein (240 aa).

Positions 1-19 are cleaved as a signal peptide; sequence MIAFIVLPILAAVLQQSSG. Positions 39–166 constitute an SCP domain; that stretch reads DLHNSLRRSV…EYSYFYVCQY (128 aa). Disulfide bonds link cysteine 75-cysteine 153, cysteine 92-cysteine 167, cysteine 148-cysteine 164, cysteine 186-cysteine 193, cysteine 189-cysteine 198, cysteine 202-cysteine 235, cysteine 211-cysteine 229, and cysteine 220-cysteine 233. One can recognise a ShKT domain in the interval 202-235; sequence CRQENKFTNCDSLVRQSSCQDNYMKTNCPASCFC.

The protein belongs to the CRISP family. Expressed by the venom gland.

It is found in the secreted. Blocks contraction of smooth muscle elicited by high potassium-induced depolarization, but does not block caffeine-stimulated contraction. May target voltage-gated calcium channels on smooth muscle. In Protobothrops jerdonii (Jerdon's pitviper), this protein is Cysteine-rich venom protein.